The primary structure comprises 306 residues: Polyadenylate-binding protein 2 (306 aa).

Over residues 1 to 12 (MAAAAAAAAAAG) the composition is skewed to low complexity. The interval 1 to 115 (MAAAAAAAAA…EGDPGDGAIE (115 aa)) is disordered. A2 is subject to N-acetylalanine. The tract at residues 2-145 (AAAAAAAAAA…LKELQNEVEK (144 aa)) is interaction with SKIP. R17 is subject to Omega-N-methylarginine. S19 carries the post-translational modification Phosphoserine. Gly residues predominate over residues 30–47 (GAGGEAGEGAPGGAGDYG). Positions 51 to 72 (ESEELEPEELLLEPEPEPEPEE) are enriched in acidic residues. Position 52 is a phosphoserine (S52). A compositionally biased stretch (pro residues) spans 77 to 87 (PRAPPGAPGPG). Residues 115-151 (EDPELEAIKARVREMEEEAEKLKELQNEVEKQMNMSP) adopt a coiled-coil conformation. The segment at 119–147 (LEAIKARVREMEEEAEKLKELQNEVEKQM) is stimulates PAPOLA. Phosphoserine is present on residues S150 and S235. Positions 155 to 306 (NAGPVIMSIE…ARATSWYSPY (152 aa)) are necessary for homooligomerization. The region spanning 172–249 (RSIYVGNVDY…RQIKVIPKRT (78 aa)) is the RRM domain. Asymmetric dimethylarginine; alternate is present on residues R238, R259, and R263. An omega-N-methylarginine; alternate mark is found at R238, R259, and R263. Asymmetric dimethylarginine is present on residues R265, R267, R269, R277, R279, R287, R289, R291, R294, R296, and R298. An interaction with PAPOLA region spans residues 286-306 (SRPRGRVYRGRARATSWYSPY).

Monomer and homooligomer. Binds RNA as a monomer and oligomerizes when bound to poly(A). Associates in a ternary complex with CPSF4 and NS/NS1 and interaction with NS/NS1, blocks nuclear export of host cell mRNAs. Associates in a single complex with SKIP and MYOD1 and interacts with SKIP in differentiated myocytes. Interacts with NUDT21/CPSF5. Identified in a IGF2BP1-dependent mRNP granule complex containing untranslated mRNAs. Interacts with PAPOLA, but only in presence of oligo(A) RNA. Interacts with transportin. May interact with SETX. Interacts (via RRM domain and C-terminal arginine-rich region) with ZFP36 (via hypophosphorylated form); this interaction occurs in the nucleus in a RNA-independent manner, decreases in presence of single-stranded poly(A) RNA-oligomer and in a p38-dependent-manner and may down-regulated RNA poly(A) polymerase activity. Component of the poly(A) tail exosome targeting (PAXT) complex composed of PABPN1, ZFC3H1 and MTREX. Interacts with ZFC3H1 in a RNase-insensitive manner. Interacts with FRG1. Interacts with ZC3H11A. In terms of processing, arginine dimethylation is asymmetric and involves PRMT1 and PRMT3. It does not influence the RNA binding properties. As to expression, ubiquitous.

Its subcellular location is the nucleus. It is found in the cytoplasm. It localises to the nucleus speckle. Its function is as follows. Involved in the 3'-end formation of mRNA precursors (pre-mRNA) by the addition of a poly(A) tail of 200-250 nt to the upstream cleavage product. Stimulates poly(A) polymerase (PAPOLA) conferring processivity on the poly(A) tail elongation reaction and also controls the poly(A) tail length. Increases the affinity of poly(A) polymerase for RNA. Is also present at various stages of mRNA metabolism including nucleocytoplasmic trafficking and nonsense-mediated decay (NMD) of mRNA. Cooperates with SKIP to synergistically activate E-box-mediated transcription through MYOD1 and may regulate the expression of muscle-specific genes. Binds to poly(A) and to poly(G) with high affinity. May protect the poly(A) tail from degradation. Subunit of the trimeric poly(A) tail exosome targeting (PAXT) complex, a complex that directs a subset of long and polyadenylated poly(A) RNAs for exosomal degradation. The RNA exosome is fundamental for the degradation of RNA in eukaryotic nuclei. Substrate targeting is facilitated by its cofactor MTREX, which links to RNA-binding protein adapters. The chain is Polyadenylate-binding protein 2 (PABPN1) from Bos taurus (Bovine).